A 457-amino-acid polypeptide reads, in one-letter code: Argininosuccinate lyase (457 aa).

It belongs to the lyase 1 family. Argininosuccinate lyase subfamily.

Its subcellular location is the cytoplasm. It carries out the reaction 2-(N(omega)-L-arginino)succinate = fumarate + L-arginine. It functions in the pathway amino-acid biosynthesis; L-arginine biosynthesis; L-arginine from L-ornithine and carbamoyl phosphate: step 3/3. This Yersinia pseudotuberculosis serotype O:1b (strain IP 31758) protein is Argininosuccinate lyase.